The primary structure comprises 301 residues: Probable 5-dehydro-4-deoxyglucarate dehydratase (301 aa).

The protein belongs to the DapA family.

The enzyme catalyses 5-dehydro-4-deoxy-D-glucarate + H(+) = 2,5-dioxopentanoate + CO2 + H2O. Its pathway is carbohydrate acid metabolism; D-glucarate degradation; 2,5-dioxopentanoate from D-glucarate: step 2/2. The sequence is that of Probable 5-dehydro-4-deoxyglucarate dehydratase from Cereibacter sphaeroides (strain KD131 / KCTC 12085) (Rhodobacter sphaeroides).